Reading from the N-terminus, the 293-residue chain is Putative serine protease 42 (293 aa).

An N-terminal signal peptide occupies residues 1 to 26; sequence MSSGGGSRGLLAWLLLLQPWPGQNWA. The segment at 33–60 is disordered; sequence LPSPLLSEEGGENPEASPAPGPEAGPPL. One can recognise a Peptidase S1 domain in the interval 80–293; that stretch reads IVGGVDAEEG…IVSWGIGCGR (214 aa). Residues cysteine 105 and cysteine 121 are joined by a disulfide bond. Histidine 120 acts as the Charge relay system in catalysis. Residue asparagine 141 is glycosylated (N-linked (GlcNAc...) asparagine). The active-site Charge relay system is the aspartate 166. N-linked (GlcNAc...) asparagine glycosylation is present at asparagine 177. Intrachain disulfides connect cysteine 200–cysteine 273, cysteine 232–cysteine 253, and cysteine 263–cysteine 291. Catalysis depends on serine 267, which acts as the Charge relay system. Asparagine 276 carries N-linked (GlcNAc...) asparagine glycosylation.

It belongs to the peptidase S1 family.

It is found in the cytoplasm. Its subcellular location is the cell membrane. In terms of biological role, plays a role in spermatogenesis. Involved in germ cell survival during meiosis. The polypeptide is Putative serine protease 42 (Homo sapiens (Human)).